We begin with the raw amino-acid sequence, 309 residues long: G-protein coupled receptor 35 (309 aa).

Residues methionine 1–tyrosine 24 lie on the Extracellular side of the membrane. An N-linked (GlcNAc...) asparagine glycan is attached at asparagine 2. A helical membrane pass occupies residues alanine 25–phenylalanine 45. The Cytoplasmic segment spans residues cysteine 46–arginine 56. The helical transmembrane segment at isoleucine 57–leucine 77 threads the bilayer. Residues histidine 78–glutamine 90 are Extracellular-facing. Cysteines 89 and 162 form a disulfide. A helical membrane pass occupies residues leucine 91–valine 112. At aspartate 113–alanine 135 the chain is on the cytoplasmic side. The helical transmembrane segment at valine 136 to isoleucine 156 threads the bilayer. Over glutamine 157 to alanine 174 the chain is Extracellular. Residues phenylalanine 175–valine 195 traverse the membrane as a helical segment. Topologically, residues threonine 196–methionine 218 are cytoplasmic. A helical transmembrane segment spans residues valine 219–valine 239. Residues arginine 240 to leucine 258 are Extracellular-facing. The helical transmembrane segment at tyrosine 259–methionine 279 threads the bilayer. Topologically, residues alanine 280–alanine 309 are cytoplasmic. 2 positions are modified to phosphoserine: serine 287 and serine 294. Phosphoserine; by GRK5 and GRK6 is present on residues serine 300 and serine 303. Threonine 307 carries the post-translational modification Phosphothreonine.

It belongs to the G-protein coupled receptor 1 family. Interacts with GNA13. Interacts with ARRB2. Multiply phosphorylated in clusters of serines and threonines in the C-terminal tail. Phosphorylation of Ser-300 and Ser-303 is mediated by GRK5 and/or GRK6. In terms of tissue distribution, predominantly expressed in immune and gastrointestinal tissues.

The protein localises to the cell membrane. Its function is as follows. G-protein coupled receptor that binds to several ligands including the tryptophan metabolite kynurenic acid (KYNA), lysophosphatidic acid (LPA) or 5-hydroxyindoleacetic acid (5-HIAA) with high affinity, leading to rapid and transient activation of numerous intracellular signaling pathways. Plays a role in neutrophil recruitment to sites of inflammation and bacterial clearance through the major serotonin metabolite 5-HIAA that acts as a physiological ligand. Stimulates lipid metabolism, thermogenic, and anti-inflammatory gene expression in adipose tissue once activated by kynurenic acid. In macrophages, activation by lysophosphatidic acid promotes GPR35-induced signaling with a distinct transcriptional profile characterized by TNF production associated with ERK and NF-kappa-B activation. In turn, induces chemotaxis of macrophages. The chain is G-protein coupled receptor 35 (GPR35) from Homo sapiens (Human).